A 471-amino-acid polypeptide reads, in one-letter code: Ribulose bisphosphate carboxylase large chain (471 aa).

Lys5 is modified (N6,N6,N6-trimethyllysine). Substrate is bound by residues Asn114 and Thr164. Residue Lys166 is the Proton acceptor of the active site. Lys168 lines the substrate pocket. The Mg(2+) site is built by Lys192, Asp194, and Glu195. The residue at position 192 (Lys192) is an N6-carboxylysine. His285 acts as the Proton acceptor in catalysis. Substrate contacts are provided by Arg286, His318, and Ser370.

It belongs to the RuBisCO large chain family. Type I subfamily. In terms of assembly, heterohexadecamer of 8 large chains and 8 small chains; disulfide-linked. The disulfide link is formed within the large subunit homodimers. Requires Mg(2+) as cofactor. Post-translationally, the disulfide bond which can form in the large chain dimeric partners within the hexadecamer appears to be associated with oxidative stress and protein turnover.

The protein resides in the plastid. It is found in the chloroplast. It carries out the reaction 2 (2R)-3-phosphoglycerate + 2 H(+) = D-ribulose 1,5-bisphosphate + CO2 + H2O. The enzyme catalyses D-ribulose 1,5-bisphosphate + O2 = 2-phosphoglycolate + (2R)-3-phosphoglycerate + 2 H(+). RuBisCO catalyzes two reactions: the carboxylation of D-ribulose 1,5-bisphosphate, the primary event in carbon dioxide fixation, as well as the oxidative fragmentation of the pentose substrate in the photorespiration process. Both reactions occur simultaneously and in competition at the same active site. In Schlumbergera truncata (Thanksgiving cactus), this protein is Ribulose bisphosphate carboxylase large chain.